Here is a 45-residue protein sequence, read N- to C-terminus: Turripeptide OL11-like (45 aa).

Disulfide bonds link cysteine 1-cysteine 31, cysteine 5-cysteine 24, and cysteine 13-cysteine 45. The Kazal-like domain maps to 1–45 (CMTICTMEYWPVCGSDGKTYPNKCHLTSTACTSQKDITVLHEGKC).

Belongs to the conopeptide P-like superfamily. As to expression, expressed by the venom duct.

It is found in the secreted. Its function is as follows. Acts as a neurotoxin by inhibiting an ion channel. May also act as a serine protease inhibitor, since it possess the kazal serine protease inhibitor signature. The protein is Turripeptide OL11-like of Lophiotoma albina (Sea snail).